The primary structure comprises 199 residues: ATP-dependent Clp protease proteolytic subunit (199 aa).

Catalysis depends on S102, which acts as the Nucleophile. The active site involves H127.

It belongs to the peptidase S14 family. Fourteen ClpP subunits assemble into 2 heptameric rings which stack back to back to give a disk-like structure with a central cavity, resembling the structure of eukaryotic proteasomes.

The protein resides in the cytoplasm. The catalysed reaction is Hydrolysis of proteins to small peptides in the presence of ATP and magnesium. alpha-casein is the usual test substrate. In the absence of ATP, only oligopeptides shorter than five residues are hydrolyzed (such as succinyl-Leu-Tyr-|-NHMec, and Leu-Tyr-Leu-|-Tyr-Trp, in which cleavage of the -Tyr-|-Leu- and -Tyr-|-Trp bonds also occurs).. Its function is as follows. Cleaves peptides in various proteins in a process that requires ATP hydrolysis. Has a chymotrypsin-like activity. Plays a major role in the degradation of misfolded proteins. The sequence is that of ATP-dependent Clp protease proteolytic subunit from Pseudothermotoga lettingae (strain ATCC BAA-301 / DSM 14385 / NBRC 107922 / TMO) (Thermotoga lettingae).